We begin with the raw amino-acid sequence, 443 residues long: Differentially expressed in FDCP 8 homolog A (443 aa).

A disordered region spans residues 1 to 49 (MEYDDKLVRFRQGHLNPFDKQGGAERHPADSEAQPPKDSSTISPHSIPE). Phorbol-ester/DAG-type zinc fingers lie at residues 134–185 (EHRF…TKPC) and 364–424 (IHTT…STSC).

The protein belongs to the DEF8 family.

Positively regulates lysosome peripheral distribution and ruffled border formation in osteoclasts. Involved in bone resorption. This chain is Differentially expressed in FDCP 8 homolog A (def8-a), found in Xenopus laevis (African clawed frog).